The sequence spans 149 residues: Large ribosomal subunit protein uL15 (149 aa).

Residues 1 to 54 (MSLKLHNLKPTPNSRPEKHRKGRGHAAGKGKQAGKGQSGQNKRKGHRLGFEGGQ) are disordered. A compositionally biased stretch (basic residues) spans 17–28 (EKHRKGRGHAAG).

Belongs to the universal ribosomal protein uL15 family. Part of the 50S ribosomal subunit.

Its function is as follows. Binds to the 23S rRNA. The polypeptide is Large ribosomal subunit protein uL15 (Mycoplasmopsis synoviae (strain 53) (Mycoplasma synoviae)).